A 202-amino-acid polypeptide reads, in one-letter code: MNLLHIKVSPNLFGSASREVSDYLVDRLKVKHPQLNETVLDLSQEPLPHLDGFTIEAFFTEPEQRTEQQKNAVRLSDRMVDMLFASELIVLSSPMWNLGLPSVLKAWFDHITRAGRTFRFTDGGDKIGLVADRKVYVVMASGSAFSNGPYVSHDQFTPYINVAFQYVGIRDLNFIRIDGTHDPLTRDVAVPKAISSVDEMII.

FMN contacts are provided by residues Ser9, 15–17, and 95–98; these read SAS and MWNL.

It belongs to the azoreductase type 1 family. In terms of assembly, homodimer. FMN is required as a cofactor.

It catalyses the reaction 2 a quinone + NADH + H(+) = 2 a 1,4-benzosemiquinone + NAD(+). The enzyme catalyses N,N-dimethyl-1,4-phenylenediamine + anthranilate + 2 NAD(+) = 2-(4-dimethylaminophenyl)diazenylbenzoate + 2 NADH + 2 H(+). Functionally, quinone reductase that provides resistance to thiol-specific stress caused by electrophilic quinones. Its function is as follows. Also exhibits azoreductase activity. Catalyzes the reductive cleavage of the azo bond in aromatic azo compounds to the corresponding amines. This Hahella chejuensis (strain KCTC 2396) protein is FMN-dependent NADH:quinone oxidoreductase 2.